The chain runs to 458 residues: MSLRIYNTLSRALEEFSPLEPGHVRMYVCGMTVYDLCHLGHARSMIAFDVVQRWLRASGLAVTYVRNITDIDDKIIKRAVENGETIRSLTDRMIDALHQDADALGIERPTHEPRATAYVPQMLDMIGTLQGKGLAYQAGNGDVNYAVRKFPGYGKLSGKSLDELNAGERVAVQDGKHDPLDFVLWKSAKPEEPADVKWRSPFGEGRPGWHIECSAMGCALLGESFDIHGGGADLQFPHHENEIAQSEGATGKPFARLWMHNGFINVDNEKMSKSLGNFFTIRDVLKEYDAETVRFFVVRSHYRSPLNYSNVHLDDARAALKRLYTALSLVAPAPVEVDWAEGYAARFKAAMDEDFGTPEAVAVLFDLAGEVNRSKSPAAAGLLKALGGHLGLLQADPQDFLKAGAGLDEAAIQAQIAARATAKAAKNFAEADRIRNDLLAQGIVLKDSASGTTWEAAQ.

Cys-29 contacts Zn(2+). The 'HIGH' region motif lies at Met-31–His-41. Zn(2+)-binding residues include Cys-213, His-238, and Glu-242. Residues Lys-270–Ser-274 carry the 'KMSKS' region motif. An ATP-binding site is contributed by Lys-273.

The protein belongs to the class-I aminoacyl-tRNA synthetase family. As to quaternary structure, monomer. Zn(2+) is required as a cofactor.

Its subcellular location is the cytoplasm. The catalysed reaction is tRNA(Cys) + L-cysteine + ATP = L-cysteinyl-tRNA(Cys) + AMP + diphosphate. This chain is Cysteine--tRNA ligase, found in Acidovorax sp. (strain JS42).